We begin with the raw amino-acid sequence, 359 residues long: ATP synthase subunit gamma, chloroplastic (359 aa).

The transit peptide at 1-35 directs the protein to the chloroplast; it reads MSCSHLSTAWSSSALASSASTTRRRSPPRSGLLVR. Cys124 is a catalytic residue. A disulfide bond links Cys234 and Cys240.

The protein belongs to the ATPase gamma chain family. In terms of assembly, F-type ATPases have 2 components, CF(1) - the catalytic core - and CF(0) - the membrane proton channel. CF(1) has five subunits: alpha(3), beta(3), gamma(1), delta(1), epsilon(1). CF(0) has four main subunits: a, b, b' and c.

It is found in the plastid. Its subcellular location is the chloroplast thylakoid membrane. In terms of biological role, produces ATP from ADP in the presence of a proton gradient across the membrane. The gamma chain is believed to be important in regulating ATPase activity and the flow of protons through the CF(0) complex. Its function is as follows. Inceptin is a proteolytic fragment produced by insect larvae that previously ingested the protein. This peptide mediate plant perception of herbivory through the induction of volatile, phenylpropanoid and protease inhibitor defenses such as ethylene, jasmonic acid and salicylic acid for example. In Zea mays (Maize), this protein is ATP synthase subunit gamma, chloroplastic.